The sequence spans 563 residues: Arginine--tRNA ligase (563 aa).

A 'HIGH' region motif is present at residues 120 to 130; the sequence is PNIAKPFHIGH.

This sequence belongs to the class-I aminoacyl-tRNA synthetase family. Monomer.

Its subcellular location is the cytoplasm. The enzyme catalyses tRNA(Arg) + L-arginine + ATP = L-arginyl-tRNA(Arg) + AMP + diphosphate. This is Arginine--tRNA ligase from Clostridium botulinum (strain 657 / Type Ba4).